A 741-amino-acid chain; its full sequence is Catalase-peroxidase 2 (741 aa).

An N-terminal signal peptide occupies residues 1–28 (MQRNRIAKSVLAALAVIAMSAGSISARA). A cross-link (tryptophyl-tyrosyl-methioninium (Trp-Tyr) (with M-254)) is located at residues 107-228 (WHGAGTYRTY…LAATQMGLIY (122 aa)). The active-site Proton acceptor is H108. Residues 228 to 254 (YVNPEGPNGNPDPVAAAQDIREAFGRM) constitute a cross-link (tryptophyl-tyrosyl-methioninium (Tyr-Met) (with W-107)). H269 provides a ligand contact to heme b.

Belongs to the peroxidase family. Peroxidase/catalase subfamily. In terms of assembly, homodimer or homotetramer. The cofactor is heme b. In terms of processing, formation of the three residue Trp-Tyr-Met cross-link is important for the catalase, but not the peroxidase activity of the enzyme.

The enzyme catalyses H2O2 + AH2 = A + 2 H2O. It carries out the reaction 2 H2O2 = O2 + 2 H2O. Functionally, bifunctional enzyme with both catalase and broad-spectrum peroxidase activity. The polypeptide is Catalase-peroxidase 2 (Burkholderia vietnamiensis (strain G4 / LMG 22486) (Burkholderia cepacia (strain R1808))).